The primary structure comprises 122 residues: Large ribosomal subunit protein uL14 (122 aa).

This sequence belongs to the universal ribosomal protein uL14 family. Part of the 50S ribosomal subunit. Forms a cluster with proteins L3 and L19. In the 70S ribosome, L14 and L19 interact and together make contacts with the 16S rRNA in bridges B5 and B8.

In terms of biological role, binds to 23S rRNA. Forms part of two intersubunit bridges in the 70S ribosome. The chain is Large ribosomal subunit protein uL14 from Burkholderia lata (strain ATCC 17760 / DSM 23089 / LMG 22485 / NCIMB 9086 / R18194 / 383).